We begin with the raw amino-acid sequence, 421 residues long: ATP-dependent RNA helicase RhlB (421 aa).

A Q motif motif is present at residues 9 to 37; it reads QKFSDFALHPQVVEALEKKRFYNCTPIQA. Residues 40–219 form the Helicase ATP-binding domain; it reads LPLTLAGRDV…FEQMNNAEYV (180 aa). 53–60 provides a ligand contact to ATP; it reads AQTGTGKT. A DEAD box motif is present at residues 165-168; it reads DEAD. The region spanning 245–390 is the Helicase C-terminal domain; that stretch reads RLLQTLIEEE…VSKYNPEALM (146 aa). The tract at residues 396 to 421 is disordered; the sequence is PLRLTRSRPGNGPRRAGAPRNRRRSG. Positions 402–414 are enriched in low complexity; sequence SRPGNGPRRAGAP.

The protein belongs to the DEAD box helicase family. RhlB subfamily. As to quaternary structure, component of the RNA degradosome, which is a multiprotein complex involved in RNA processing and mRNA degradation.

It is found in the cytoplasm. The enzyme catalyses ATP + H2O = ADP + phosphate + H(+). Functionally, DEAD-box RNA helicase involved in RNA degradation. Has RNA-dependent ATPase activity and unwinds double-stranded RNA. The protein is ATP-dependent RNA helicase RhlB of Salmonella dublin (strain CT_02021853).